The sequence spans 532 residues: 2,3-bisphosphoglycerate-independent phosphoglycerate mutase (532 aa).

Mn(2+) contacts are provided by Asp-15 and Ser-65. Ser-65 acts as the Phosphoserine intermediate in catalysis. Substrate-binding positions include His-126, 156–157 (RD), Arg-188, Arg-194, 258–261 (RPDR), and Lys-331. Residues Asp-398, His-402, Asp-439, His-440, and His-457 each contribute to the Mn(2+) site.

The protein belongs to the BPG-independent phosphoglycerate mutase family. In terms of assembly, monomer. Mn(2+) is required as a cofactor.

It catalyses the reaction (2R)-2-phosphoglycerate = (2R)-3-phosphoglycerate. Its pathway is carbohydrate degradation; glycolysis; pyruvate from D-glyceraldehyde 3-phosphate: step 3/5. Catalyzes the interconversion of 2-phosphoglycerate and 3-phosphoglycerate. The protein is 2,3-bisphosphoglycerate-independent phosphoglycerate mutase of Cyanothece sp. (strain PCC 7425 / ATCC 29141).